The following is a 3092-amino-acid chain: Probable polyketide synthase 45 (3092 aa).

Positions 10-430 (DNDVAIIGIG…GSNVCLILTE (421 aa)) constitute a Ketosynthase family 3 (KS3) domain. Residues cysteine 170, histidine 315, and histidine 353 each act as for beta-ketoacyl synthase activity in the active site. The segment at 640 to 673 (GILASISIGHSLGEVSSAVCSGMIDLETGCFIIY) is acyl/malonyl transferase. The active-site For acyl/malonyl transferase activity is serine 650. Residues 967–1087 (INQLGNRNER…GKFSITKHND (121 aa)) are N-terminal hotdog fold. In terms of domain architecture, PKS/mFAS DH spans 967-1254 (INQLGNRNER…YTQLTPYKNQ (288 aa)). Histidine 999 serves as the catalytic Proton acceptor; for dehydratase activity. The interval 1103–1254 (NFVTIQKKEL…YTQLTPYKNQ (152 aa)) is C-terminal hotdog fold. Catalysis depends on aspartate 1165, which acts as the Proton donor; for dehydratase activity. A Carrier domain is found at 2566 to 2644 (SDDLSIREEI…QLIQSVTDAM (79 aa)). Serine 2604 is modified (O-(pantetheine 4'-phosphoryl)serine). A helical membrane pass occupies residues 2705 to 2725 (NTVFLTGSSGFIGIYILFYLI).

Requires pantetheine 4'-phosphate as cofactor.

The protein resides in the membrane. Functionally, probable polyketide synthase. The polypeptide is Probable polyketide synthase 45 (pks45) (Dictyostelium discoideum (Social amoeba)).